The chain runs to 234 residues: Purine nucleoside phosphorylase DeoD-type (234 aa).

H4 lines the a purine D-ribonucleoside pocket. Residues G20, R24, R43, and 87 to 90 each bind phosphate; that span reads RVGT. A purine D-ribonucleoside-binding positions include 179 to 181 and 203 to 204; these read EME and SN.

Belongs to the PNP/UDP phosphorylase family. Homohexamer; trimer of homodimers.

It catalyses the reaction a purine D-ribonucleoside + phosphate = a purine nucleobase + alpha-D-ribose 1-phosphate. It carries out the reaction a purine 2'-deoxy-D-ribonucleoside + phosphate = a purine nucleobase + 2-deoxy-alpha-D-ribose 1-phosphate. In terms of biological role, catalyzes the reversible phosphorolytic breakdown of the N-glycosidic bond in the beta-(deoxy)ribonucleoside molecules, with the formation of the corresponding free purine bases and pentose-1-phosphate. This Latilactobacillus sakei subsp. sakei (strain 23K) (Lactobacillus sakei subsp. sakei) protein is Purine nucleoside phosphorylase DeoD-type.